The primary structure comprises 147 residues: Hemoglobin subunit beta (147 aa).

Valine 2 bears the N-acetylvaline mark. Residues 3–147 (HLSGDEKNAV…VANALAHRYH (145 aa)) enclose the Globin domain. A Phosphoserine modification is found at serine 45. Lysine 60 is subject to N6-acetyllysine. Histidine 64 lines the heme b pocket. Lysine 83 carries the N6-acetyllysine modification. A heme b-binding site is contributed by histidine 93. Residue cysteine 94 is modified to S-nitrosocysteine.

Belongs to the globin family. As to quaternary structure, heterotetramer of two alpha chains and two beta chains. As to expression, red blood cells.

Functionally, involved in oxygen transport from the lung to the various peripheral tissues. The chain is Hemoglobin subunit beta (HBB) from Camelus dromedarius (Dromedary).